A 404-amino-acid polypeptide reads, in one-letter code: NADH-quinone oxidoreductase subunit D (404 aa).

It belongs to the complex I 49 kDa subunit family. In terms of assembly, NDH-1 is composed of 14 different subunits. Subunits NuoB, C, D, E, F, and G constitute the peripheral sector of the complex.

It localises to the cell inner membrane. It carries out the reaction a quinone + NADH + 5 H(+)(in) = a quinol + NAD(+) + 4 H(+)(out). In terms of biological role, NDH-1 shuttles electrons from NADH, via FMN and iron-sulfur (Fe-S) centers, to quinones in the respiratory chain. The immediate electron acceptor for the enzyme in this species is believed to be ubiquinone. Couples the redox reaction to proton translocation (for every two electrons transferred, four hydrogen ions are translocated across the cytoplasmic membrane), and thus conserves the redox energy in a proton gradient. The chain is NADH-quinone oxidoreductase subunit D from Leptospira borgpetersenii serovar Hardjo-bovis (strain JB197).